The chain runs to 305 residues: Autophagy-related protein 14 (305 aa).

The stretch at K34–R147 forms a coiled coil.

This sequence belongs to the ATG14 family. In terms of assembly, component of the autophagy-specific VPS34 PI3-kinase complex I.

The protein resides in the preautophagosomal structure membrane. The protein localises to the vacuole membrane. Required for cytoplasm to vacuole transport (Cvt) and autophagy as a part of the autophagy-specific VPS34 PI3-kinase complex I. This complex is essential to recruit the ATG8-phosphatidylinositol conjugate and the ATG12-ATG5 conjugate to the pre-autophagosomal structure. ATG14 mediates the specific binding of the VPS34 PI3-kinase complex I to the preautophagosomal structure (PAS). In Kluyveromyces marxianus (strain DMKU3-1042 / BCC 29191 / NBRC 104275) (Yeast), this protein is Autophagy-related protein 14.